The chain runs to 188 residues: Meiotically up-regulated gene 94 protein (188 aa).

The protein localises to the cytoplasm. It is found in the nucleus. Functionally, has a role in meiosis. This Schizosaccharomyces pombe (strain 972 / ATCC 24843) (Fission yeast) protein is Meiotically up-regulated gene 94 protein (mug94).